Reading from the N-terminus, the 258-residue chain is Putative cysteine-rich repeat secretory protein 16 (258 aa).

A signal peptide spans 1 to 30 (MYYSSPTCFVLITIFAVVVTQLIFMRTVSS). 2 consecutive Gnk2-homologous domains span residues 37-139 (YLNH…PFDT) and 144-247 (DKDN…LYPF).

This sequence belongs to the cysteine-rich repeat secretory protein family.

It is found in the secreted. This Arabidopsis thaliana (Mouse-ear cress) protein is Putative cysteine-rich repeat secretory protein 16 (CRRSP16).